Here is a 316-residue protein sequence, read N- to C-terminus: ATP synthase gamma chain (316 aa).

This sequence belongs to the ATPase gamma chain family. F-type ATPases have 2 components, CF(1) - the catalytic core - and CF(0) - the membrane proton channel. CF(1) has five subunits: alpha(3), beta(3), gamma(1), delta(1), epsilon(1). CF(0) has three main subunits: a, b and c.

It is found in the cellular thylakoid membrane. Functionally, produces ATP from ADP in the presence of a proton gradient across the membrane. The gamma chain is believed to be important in regulating ATPase activity and the flow of protons through the CF(0) complex. The protein is ATP synthase gamma chain of Prochlorococcus marinus (strain MIT 9303).